The sequence spans 156 residues: Small ribosomal subunit protein uS7 (156 aa).

This sequence belongs to the universal ribosomal protein uS7 family. Part of the 30S ribosomal subunit. Contacts proteins S9 and S11.

Functionally, one of the primary rRNA binding proteins, it binds directly to 16S rRNA where it nucleates assembly of the head domain of the 30S subunit. Is located at the subunit interface close to the decoding center, probably blocks exit of the E-site tRNA. The polypeptide is Small ribosomal subunit protein uS7 (Gloeobacter violaceus (strain ATCC 29082 / PCC 7421)).